The sequence spans 151 residues: UPF0178 protein ESA_02916 (151 aa).

The protein belongs to the UPF0178 family.

The sequence is that of UPF0178 protein ESA_02916 from Cronobacter sakazakii (strain ATCC BAA-894) (Enterobacter sakazakii).